Consider the following 197-residue polypeptide: RIP-like protein (197 aa).

The tract at residues 1–20 (MNSTQSPVYRTSVEQKRHAQ) is disordered. Residues 122 to 191 (CPVCQIKNLR…GQLYDMCGSC (70 aa)) form an RIP-type zinc finger.

The protein is RIP-like protein (Ripalpha) of Drosophila melanogaster (Fruit fly).